Here is a 132-residue protein sequence, read N- to C-terminus: Prefoldin subunit alpha (132 aa).

The protein belongs to the prefoldin subunit alpha family. In terms of assembly, heterohexamer of two alpha and four beta subunits.

The protein resides in the cytoplasm. In terms of biological role, molecular chaperone capable of stabilizing a range of proteins. Seems to fulfill an ATP-independent, HSP70-like function in archaeal de novo protein folding. The sequence is that of Prefoldin subunit alpha (pfdA) from Pyrobaculum aerophilum (strain ATCC 51768 / DSM 7523 / JCM 9630 / CIP 104966 / NBRC 100827 / IM2).